Here is a 242-residue protein sequence, read N- to C-terminus: Pyridoxine 5'-phosphate synthase (242 aa).

Residue Asn-6 participates in 3-amino-2-oxopropyl phosphate binding. Residue 8-9 coordinates 1-deoxy-D-xylulose 5-phosphate; it reads DH. Arg-17 contacts 3-amino-2-oxopropyl phosphate. His-42 functions as the Proton acceptor in the catalytic mechanism. Residues Arg-44 and His-49 each contribute to the 1-deoxy-D-xylulose 5-phosphate site. The active-site Proton acceptor is Glu-69. A 1-deoxy-D-xylulose 5-phosphate-binding site is contributed by Thr-99. His-193 serves as the catalytic Proton donor. 3-amino-2-oxopropyl phosphate contacts are provided by residues Gly-194 and 217–218; that span reads GH.

This sequence belongs to the PNP synthase family. As to quaternary structure, homooctamer; tetramer of dimers.

It is found in the cytoplasm. The enzyme catalyses 3-amino-2-oxopropyl phosphate + 1-deoxy-D-xylulose 5-phosphate = pyridoxine 5'-phosphate + phosphate + 2 H2O + H(+). The protein operates within cofactor biosynthesis; pyridoxine 5'-phosphate biosynthesis; pyridoxine 5'-phosphate from D-erythrose 4-phosphate: step 5/5. In terms of biological role, catalyzes the complicated ring closure reaction between the two acyclic compounds 1-deoxy-D-xylulose-5-phosphate (DXP) and 3-amino-2-oxopropyl phosphate (1-amino-acetone-3-phosphate or AAP) to form pyridoxine 5'-phosphate (PNP) and inorganic phosphate. The sequence is that of Pyridoxine 5'-phosphate synthase from Aquifex aeolicus (strain VF5).